The chain runs to 577 residues: MARLSRERYAQLYGPTTGDRIRLADTNLLVEVTEDRCGGPGLAGDEAVFGGGKVLRESMGQGRASRADGAPDTVITGAVIIDYWGIIKADIGIRDGRIVGIGKAGNPDIMTGVHRDLVVGPSTEIISGNRRIVTAGTVDCHVHLICPQIIVEALAAGTTTIIGGGTGPAEGTKATTVTPGEWHLARMLESLDGWPVNFALLGKGNTVNPDALWEQLRGGASGFKLHEDWGSTPAAIDTCLAVADVAGVQVALHSDTLNETGFVEDTIGAIAGRSIHAYHTEGAGGGHAPDIITVAAQPNVLPSSTNPTRPHTVNTLDEHLDMLMVCHHLNPRIPEDLAFAESRIRPSTIAAEDVLHDMGAISMIGSDSQAMGRVGEVVLRTWQTAHVMKARRGALEGDPSGSQAADNNRVRRYIAKYTICPAIAHGMDHLIGSVEVGKLADLVLWEPAFFGVRPHVVLKGGAIAWAAMGDANASIPTPQPVLPRPMFGAAAATAAATSVHFVAPQSIDARLADRLAVNRGLAPVADVRAVGKTDLPLNDALPSIEVDPDTFTVRIDGQVWQPQPAAELPMTQRYFLF.

Residues 136 to 577 (GTVDCHVHLI…LPMTQRYFLF (442 aa)) enclose the Urease domain. Ni(2+) contacts are provided by histidine 141, histidine 143, and lysine 224. Lysine 224 carries the post-translational modification N6-carboxylysine. Substrate is bound at residue histidine 226. Ni(2+) is bound by residues histidine 253 and histidine 279. The Proton donor role is filled by histidine 327. Aspartate 367 is a Ni(2+) binding site.

It belongs to the metallo-dependent hydrolases superfamily. Urease alpha subunit family. In terms of assembly, heterotrimer of UreA (gamma), UreB (beta) and UreC (alpha) subunits. Three heterotrimers associate to form the active enzyme. The cofactor is Ni cation. Post-translationally, carboxylation allows a single lysine to coordinate two nickel ions.

It localises to the cytoplasm. The enzyme catalyses urea + 2 H2O + H(+) = hydrogencarbonate + 2 NH4(+). It functions in the pathway nitrogen metabolism; urea degradation; CO(2) and NH(3) from urea (urease route): step 1/1. The sequence is that of Urease subunit alpha from Mycobacterium bovis (strain ATCC BAA-935 / AF2122/97).